A 606-amino-acid chain; its full sequence is Zinc finger protein 214 (606 aa).

Residues 3-83 (VTFEDVTIIF…GAQMYENQNY (81 aa)) enclose the KRAB domain. The C2H2-type 1; degenerate zinc finger occupies 275 to 297 (YGCDEVDGNFHQSSGVHFHQRVH). The C2H2-type 2 zinc-finger motif lies at 303–325 (YSCNACGKSFSQISSLHNHQRVH). A C2H2-type 3; degenerate zinc finger spans residues 330–352 (FYKIECDKDLSRNSLLHIHQRLH). 8 C2H2-type zinc fingers span residues 358–380 (FKCNQCGKSFNRSSVLHVHQRVH), 386–408 (YKCDECGKGFSQSSNLRIHQLVH), 414–436 (YKCEDCGKGFTQRSNLQIHQRVH), 442–464 (YKCDDCGKDFSHSSDLRIHQRVH), 470–492 (YTCPECGKGFSKSSKLHTHQRVH), 498–520 (YKCEECGKGFSQRSHLLIHQRVH), 526–548 (YKCHDCGKGFSHSSNLHIHQRVH), and 554–576 (YQCAKCGKGFSHSSALRIHQRVH).

This sequence belongs to the krueppel C2H2-type zinc-finger protein family.

It is found in the nucleus. May be involved in transcriptional regulation. The chain is Zinc finger protein 214 (ZNF214) from Homo sapiens (Human).